Here is a 110-residue protein sequence, read N- to C-terminus: Putative pterin-4-alpha-carbinolamine dehydratase (110 aa).

Belongs to the pterin-4-alpha-carbinolamine dehydratase family.

The catalysed reaction is (4aS,6R)-4a-hydroxy-L-erythro-5,6,7,8-tetrahydrobiopterin = (6R)-L-erythro-6,7-dihydrobiopterin + H2O. The sequence is that of Putative pterin-4-alpha-carbinolamine dehydratase from Vibrio vulnificus (strain CMCP6).